Here is a 179-residue protein sequence, read N- to C-terminus: Methylated-DNA--protein-cysteine methyltransferase (179 aa).

Cys130 (nucleophile; methyl group acceptor) is an active-site residue.

This sequence belongs to the MGMT family.

The protein localises to the cytoplasm. It carries out the reaction a 6-O-methyl-2'-deoxyguanosine in DNA + L-cysteinyl-[protein] = S-methyl-L-cysteinyl-[protein] + a 2'-deoxyguanosine in DNA. The catalysed reaction is a 4-O-methyl-thymidine in DNA + L-cysteinyl-[protein] = a thymidine in DNA + S-methyl-L-cysteinyl-[protein]. In terms of biological role, involved in the cellular defense against the biological effects of O6-methylguanine (O6-MeG) and O4-methylthymine (O4-MeT) in DNA. Repairs the methylated nucleobase in DNA by stoichiometrically transferring the methyl group to a cysteine residue in the enzyme. This is a suicide reaction: the enzyme is irreversibly inactivated. The protein is Methylated-DNA--protein-cysteine methyltransferase of Haemophilus influenzae (strain ATCC 51907 / DSM 11121 / KW20 / Rd).